A 548-amino-acid polypeptide reads, in one-letter code: Formyltransferase/hydrolase complex Fhc subunit A (548 aa).

Residues His57, His59, and His227 each contribute to the Zn(2+) site.

The protein belongs to the metallo-dependent hydrolases superfamily. FwdA/FmdA family. In terms of assembly, octaheteromer. Part of the formyltransferase/hydrolase complex fhc; composed of FhcA, FhcB, FhcC and FhcD. Zn(2+) is required as a cofactor.

Its subcellular location is the cytoplasm. The catalysed reaction is N-formylmethanofuran + H2O = methanofuran + formate. It functions in the pathway one-carbon metabolism; formaldehyde degradation; formate from formaldehyde (H(4)MPT route): step 4/5. Functionally, involved in the transformation of 5-formyl tetrahydromethanopterin (5-formyl-H(4)MPT) to methanofuran (MFR) and formate via the formylmethanofuran (formyl-MFR). May be catalyze the hydrolysis of formylmethanofuran (formyl-MFR) to yield formate and MFR. This chain is Formyltransferase/hydrolase complex Fhc subunit A (fhcA), found in Methylorubrum extorquens (strain ATCC 14718 / DSM 1338 / JCM 2805 / NCIMB 9133 / AM1) (Methylobacterium extorquens).